We begin with the raw amino-acid sequence, 356 residues long: MKKHNYSAGPSILPQEVFEKASKAVLNFNDSGLSILEISHRSKDFVAVMDEARSLALELLGLQGKGYQALFLQGGASTAFLMAPYNLMKENGKAAYLDSGTWATAAIKEAKLFGETVIVGSSKDDNYTYIPKGYEIPADADYFHCTSNNTIFGTQIQEFPSTNIPVVCDMSSDIFSRELDFSKFDLIYAGAQKNMGPAGTTLVVVKEEILGKNGRTIPSMLDYAKHIKAESMYNTPSVFAVYVSLLTLQWIKAKGGIAAVEKLNNAKADLLYAEIDRNPLFKGAANVEDRSKMNVTFLLNNPEHTETFDALWKAAGISGLPGHRSVGGYRASIYNAMPIESVQVLVDVMKALESKV.

Residue R41 coordinates L-glutamate. Pyridoxal 5'-phosphate-binding positions include 76-77, W102, T150, D169, and Q192; that span reads AS. K193 is modified (N6-(pyridoxal phosphate)lysine). Pyridoxal 5'-phosphate is bound at residue 234–235; that stretch reads NT.

Belongs to the class-V pyridoxal-phosphate-dependent aminotransferase family. SerC subfamily. Homodimer. Requires pyridoxal 5'-phosphate as cofactor.

The protein resides in the cytoplasm. The enzyme catalyses O-phospho-L-serine + 2-oxoglutarate = 3-phosphooxypyruvate + L-glutamate. The catalysed reaction is 4-(phosphooxy)-L-threonine + 2-oxoglutarate = (R)-3-hydroxy-2-oxo-4-phosphooxybutanoate + L-glutamate. Its pathway is amino-acid biosynthesis; L-serine biosynthesis; L-serine from 3-phospho-D-glycerate: step 2/3. The protein operates within cofactor biosynthesis; pyridoxine 5'-phosphate biosynthesis; pyridoxine 5'-phosphate from D-erythrose 4-phosphate: step 3/5. Its function is as follows. Catalyzes the reversible conversion of 3-phosphohydroxypyruvate to phosphoserine and of 3-hydroxy-2-oxo-4-phosphonooxybutanoate to phosphohydroxythreonine. The polypeptide is Phosphoserine aminotransferase (Flavobacterium johnsoniae (strain ATCC 17061 / DSM 2064 / JCM 8514 / BCRC 14874 / CCUG 350202 / NBRC 14942 / NCIMB 11054 / UW101) (Cytophaga johnsonae)).